Here is a 76-residue protein sequence, read N- to C-terminus: MALLDDVKAVVVEQLDCDPAEVKEDSKFIEDLGADSLDVVELVMALEEKFDIEIPDEDAEKILTVADAIKYIENNA.

A Carrier domain is found at 1 to 76 (MALLDDVKAV…DAIKYIENNA (76 aa)). O-(pantetheine 4'-phosphoryl)serine is present on S36.

The protein belongs to the acyl carrier protein (ACP) family. Post-translationally, 4'-phosphopantetheine is transferred from CoA to a specific serine of apo-ACP by AcpS. This modification is essential for activity because fatty acids are bound in thioester linkage to the sulfhydryl of the prosthetic group.

It is found in the cytoplasm. It participates in lipid metabolism; fatty acid biosynthesis. Its function is as follows. Carrier of the growing fatty acid chain in fatty acid biosynthesis. This is Acyl carrier protein from Aliarcobacter butzleri (strain RM4018) (Arcobacter butzleri).